A 67-amino-acid chain; its full sequence is Large ribosomal subunit protein bL35 (67 aa).

Over residues 1 to 11 (MPKLKTRKAAA) the composition is skewed to basic residues. Residues 1-22 (MPKLKTRKAAAKRFEATGSGKK) form a disordered region.

It belongs to the bacterial ribosomal protein bL35 family.

The protein is Large ribosomal subunit protein bL35 of Microcystis aeruginosa (strain NIES-843 / IAM M-2473).